A 275-amino-acid chain; its full sequence is Large ribosomal subunit protein uL2 (275 aa).

Residues 28-38 (RPYEPLVETKS) show a composition bias toward basic and acidic residues. Disordered regions lie at residues 28–53 (RPYE…TTRH) and 222–275 (GVAM…RSAK). Positions 254 to 275 (KGHKTRKNKRTDKMIVRRRSAK) are enriched in basic residues.

This sequence belongs to the universal ribosomal protein uL2 family. In terms of assembly, part of the 50S ribosomal subunit. Forms a bridge to the 30S subunit in the 70S ribosome.

Its function is as follows. One of the primary rRNA binding proteins. Required for association of the 30S and 50S subunits to form the 70S ribosome, for tRNA binding and peptide bond formation. It has been suggested to have peptidyltransferase activity; this is somewhat controversial. Makes several contacts with the 16S rRNA in the 70S ribosome. The chain is Large ribosomal subunit protein uL2 from Marinobacter nauticus (strain ATCC 700491 / DSM 11845 / VT8) (Marinobacter aquaeolei).